Consider the following 279-residue polypeptide: Thiazole synthase (279 aa).

Lys116 (schiff-base intermediate with DXP) is an active-site residue. 1-deoxy-D-xylulose 5-phosphate contacts are provided by residues Gly177, 203–204 (AG), and 225–226 (NS).

It belongs to the ThiG family. As to quaternary structure, homotetramer. Forms heterodimers with either ThiH or ThiS.

It is found in the cytoplasm. The catalysed reaction is [ThiS sulfur-carrier protein]-C-terminal-Gly-aminoethanethioate + 2-iminoacetate + 1-deoxy-D-xylulose 5-phosphate = [ThiS sulfur-carrier protein]-C-terminal Gly-Gly + 2-[(2R,5Z)-2-carboxy-4-methylthiazol-5(2H)-ylidene]ethyl phosphate + 2 H2O + H(+). The protein operates within cofactor biosynthesis; thiamine diphosphate biosynthesis. In terms of biological role, catalyzes the rearrangement of 1-deoxy-D-xylulose 5-phosphate (DXP) to produce the thiazole phosphate moiety of thiamine. Sulfur is provided by the thiocarboxylate moiety of the carrier protein ThiS. In vitro, sulfur can be provided by H(2)S. The chain is Thiazole synthase from Trichodesmium erythraeum (strain IMS101).